The chain runs to 463 residues: RuvB-like 2 (463 aa).

The residue at position 2 (A2) is an N-acetylalanine. Residue K9 forms a Glycyl lysine isopeptide (Lys-Gly) (interchain with G-Cter in SUMO2) linkage. 77–84 (GQPGTGKT) lines the ATP pocket. At S437 the chain carries Phosphoserine. Glycyl lysine isopeptide (Lys-Gly) (interchain with G-Cter in SUMO2) cross-links involve residues K444 and K456.

It belongs to the RuvB family. As to quaternary structure, forms homohexameric rings. Can form a dodecamer with RUVBL1 made of two stacked hexameric rings; however, even though RUVBL1 and RUVBL2 are present in equimolar ratio, the oligomeric status of each hexamer is not known. Oligomerization may regulate binding to nucleic acids and conversely, binding to nucleic acids may affect the dodecameric assembly. Interaction of the complex with DHX34 results in conformational changes of the N-terminus of the RUVBL2 subunits, resulting in loss of nucleotide binding ability and ATP hydrolysis of the complex. Interacts with the transcriptional activation domain of MYC. Interacts with ATF2. Component of the RNA polymerase II holoenzyme complex. May also act to bridge the LEF1/TCF1-CTNNB1 complex and TBP. Component of the NuA4 histone acetyltransferase complex which contains the catalytic subunit KAT5/TIP60 and the subunits EP400, TRRAP/PAF400, BRD8/SMAP, EPC1, DMAP1/DNMAP1, RUVBL1/TIP49, RUVBL2, ING3, actin, ACTL6A/BAF53A, MORF4L1/MRG15, MORF4L2/MRGX, MRGBP, YEATS4/GAS41, VPS72/YL1 and MEAF6. The NuA4 complex interacts with MYC and the adenovirus E1A protein. RUVBL2 interacts with EP400. Component of a NuA4-related complex which contains EP400, TRRAP/PAF400, SRCAP, BRD8/SMAP, EPC1, DMAP1/DNMAP1, RUVBL1/TIP49, RUVBL2, actin, ACTL6A/BAF53A, VPS72 and YEATS4/GAS41. Interacts with NPAT. Component of the chromatin-remodeling INO80 complex; specifically part of a complex module associated with the helicase ATP-binding and the helicase C-terminal domain of INO80. Component of some MLL1/MLL complex, at least composed of the core components KMT2A/MLL1, ASH2L, HCFC1/HCF1, WDR5 and RBBP5, as well as the facultative components BACC1, CHD8, E2F6, HSP70, INO80C, KANSL1, LAS1L, MAX, MCRS1, MGA, MYST1/MOF, PELP1, PHF20, PRP31, RING2, RUVB1/TIP49A, RUVB2/TIP49B, SENP3, TAF1, TAF4, TAF6, TAF7, TAF9 and TEX10. Interacts with IGHMBP2. Interacts with TELO2. Interacts with HINT1. Component of a SWR1-like complex. Component of the R2TP complex composed at least of RUVBL1, RUVBL2, RPAP3 and PIHD1. Component of the PAQosome complex which is responsible for the biogenesis of several protein complexes and which consists of R2TP complex members RUVBL1, RUVBL2, RPAP3 and PIH1D1, URI complex members PFDN2, PFDN6, PDRG1, UXT and URI1 as well as ASDURF, POLR2E and DNAAF10/WDR92. Interacts with ITFG1. Interacts with ZMYND10. Interacts with WAC; WAC positively regulates MTOR activity by promoting the assembly of the TTT complex composed of TELO2, TTI1 and TTI2 and the RUVBL complex composed of RUVBL1 and RUVBL2 into the TTT-RUVBL complex which leads to the dimerization of the mTORC1 complex and its subsequent activation. Forms a complex with APPL1 and APPL2. Interacts with ZNHIT2 (via HIT-type zinc finger) in the presence of ATP or ADP; shows a stronger interaction in the presence of ADP. The RUVBL1/RUVBL2 complex interacts with ZNHIT1 (via HIT-type zinc finger), ZNHIT3 (via HIT-type zinc finger), ZNHIT6 (via HIT-type zinc finger) and DDX59/ZNHIT5 (via HIT-type zinc finger) in the presence of ADP. Interacts with NOPCHAP1; the interaction is direct and disrupted upon ATP binding. Interacts with SMG1.

The protein localises to the nucleus matrix. It is found in the nucleus. Its subcellular location is the nucleoplasm. The protein resides in the cytoplasm. It localises to the membrane. The protein localises to the dynein axonemal particle. It carries out the reaction ATP + H2O = ADP + phosphate + H(+). In terms of biological role, possesses single-stranded DNA-stimulated ATPase and ATP-dependent DNA helicase (5' to 3') activity; hexamerization is thought to be critical for ATP hydrolysis and adjacent subunits in the ring-like structure contribute to the ATPase activity. Component of the NuA4 histone acetyltransferase complex which is involved in transcriptional activation of select genes principally by acetylation of nucleosomal histones H4 and H2A. This modification may both alter nucleosome-DNA interactions and promote interaction of the modified histones with other proteins which positively regulate transcription. This complex may be required for the activation of transcriptional programs associated with oncogene and proto-oncogene mediated growth induction, tumor suppressor mediated growth arrest and replicative senescence, apoptosis, and DNA repair. The NuA4 complex ATPase and helicase activities seem to be, at least in part, contributed by the association of RUVBL1 and RUVBL2 with EP400. NuA4 may also play a direct role in DNA repair when recruited to sites of DNA damage. Component of a SWR1-like complex that specifically mediates the removal of histone H2A.Z/H2AZ1 from the nucleosome. Proposed core component of the chromatin remodeling INO80 complex which exhibits DNA- and nucleosome-activated ATPase activity and catalyzes ATP-dependent nucleosome sliding. Plays an essential role in oncogenic transformation by MYC and also modulates transcriptional activation by the LEF1/TCF1-CTNNB1 complex. May also inhibit the transcriptional activity of ATF2. Involved in the endoplasmic reticulum (ER)-associated degradation (ERAD) pathway where it negatively regulates expression of ER stress response genes. May play a role in regulating the composition of the U5 snRNP complex. This is RuvB-like 2 (RUVBL2) from Bos taurus (Bovine).